A 226-amino-acid chain; its full sequence is MTQLLNRSLIMLLKSNIIVQDVQSYVVQFGFEAILKEAISFDKVDVVKSLNKLRAVSTTELFLASSNNALKVAEWLVETKKANVNMCSEIFKDTPLNSAARHGSYKVAEYLIAKGAAVNGYEGALLGPPLYEAVSGKYLNVAKLLLEKGAAVDQRKSGETPLHAVAKNVRYTSKDIKDDEIYKLLVSYGADTNAKVEFRRVGFSIYDGKTVSEIAEFKVALAGESE.

4 ANK repeats span residues Val56 to Met86, Phe91 to Gly120, Leu125 to Gln154, and Ser157 to Ala194.

In Rickettsia felis (strain ATCC VR-1525 / URRWXCal2) (Rickettsia azadi), this protein is Putative ankyrin repeat protein RF_0939.